Reading from the N-terminus, the 367-residue chain is Glutamate 5-kinase (367 aa).

Lys-10 provides a ligand contact to ATP. Positions 50, 137, and 149 each coordinate substrate. ATP contacts are provided by residues Thr-169–Asp-170 and Thr-211–Lys-217. Residues Ala-275–Glu-353 form the PUA domain.

It belongs to the glutamate 5-kinase family.

The protein localises to the cytoplasm. The enzyme catalyses L-glutamate + ATP = L-glutamyl 5-phosphate + ADP. It functions in the pathway amino-acid biosynthesis; L-proline biosynthesis; L-glutamate 5-semialdehyde from L-glutamate: step 1/2. Catalyzes the transfer of a phosphate group to glutamate to form L-glutamate 5-phosphate. This is Glutamate 5-kinase from Salmonella arizonae (strain ATCC BAA-731 / CDC346-86 / RSK2980).